Consider the following 417-residue polypeptide: Vacuolar cation/proton exchanger 3 (417 aa).

Over 1 to 45 (MENPQIEMGAFKANGPQLQNGGLRSSMVQSWNLQRFVESALRSIR) the chain is Cytoplasmic. A helical membrane pass occupies residues 46-66 (IVIFTSKLNLLLPFGPASIIL). Residues 67–73 (HYTTSRH) are Extracellular-facing. A helical membrane pass occupies residues 74–94 (GLVFLFSMLGITPLAERLGYA). At 95 to 105 (TEQLAIYTGPT) the chain is on the cytoplasmic side. Residues 106–126 (VGGLLNATFGNATEMIIAIYA) form a helical membrane-spanning segment. The interval 115–150 (GNATEMIIAIYALKNGMIRVVQQSLLGSILSNMLLV) is cation selection. Residues 127 to 140 (LKNGMIRVVQQSLL) are Extracellular-facing. Residues 141–161 (GSILSNMLLVMGCAFFAGGIV) traverse the membrane as a helical segment. The Cytoplasmic portion of the chain corresponds to 162–173 (HRNKDQVFSKAT). The chain crosses the membrane as a helical span at residues 174–194 (AVVNSGLLLMAVMGLMFPAVL). Residues 195–207 (HFTHSEVRQGASE) are Extracellular-facing. A helical membrane pass occupies residues 208-230 (VSLSRFSSCIMLVAYASYLYFQL). At 231 to 258 (SGRNNAYSPIGSEEMPNEDAAEEDEESE) the chain is on the cytoplasmic side. Residues 259–279 (IGMWESIAWLAMLTLWVSILS) form a helical membrane-spanning segment. The Extracellular portion of the chain corresponds to 280–291 (EYLVNAIEGASD). A helical transmembrane segment spans residues 292-312 (SLNLPVAFISVILLPIVGNAA). The cation selection stretch occupies residues 309–344 (GNAAEHASAIMFAMKDKLDITLGVAIGSSTQISMFV). At 313–330 (EHASAIMFAMKDKLDITL) the chain is on the cytoplasmic side. A helical transmembrane segment spans residues 331–351 (GVAIGSSTQISMFVIPFCVVI). The Extracellular segment spans residues 352-360 (GWMMGQKMD). A helical transmembrane segment spans residues 361-381 (LNFQLFETATLFITVLVVAFM). The Cytoplasmic portion of the chain corresponds to 382-389 (LQDGVANY). Residues 390-410 (LKGLMLILCYLIVAASFFVHV) traverse the membrane as a helical segment. Residues 411–417 (DPQSSDD) are Extracellular-facing.

It belongs to the Ca(2+):cation antiporter (CaCA) (TC 2.A.19) family. Cation/proton exchanger (CAX) subfamily. Ubiquitous.

It localises to the vacuole membrane. Vacuolar cation/proton exchanger (CAX). Translocates Ca(2+) and other metal ions into vacuoles using the proton gradient formed by H(+)-ATPase and H(+)-pyrophosphatase. This chain is Vacuolar cation/proton exchanger 3 (CAX3), found in Oryza sativa subsp. japonica (Rice).